The chain runs to 374 residues: tRNA-specific 2-thiouridylase MnmA (374 aa).

ATP is bound by residues 12 to 19 and methionine 38; that span reads GMSGGVDS. The tract at residues 98 to 100 is interaction with target base in tRNA; that stretch reads NPD. Catalysis depends on cysteine 103, which acts as the Nucleophile. A disulfide bond links cysteine 103 and cysteine 202. ATP is bound at residue glycine 128. Residues 152-154 form an interaction with tRNA region; it reads KDQ. Catalysis depends on cysteine 202, which acts as the Cysteine persulfide intermediate. The tract at residues 316 to 317 is interaction with tRNA; it reads RY.

Belongs to the MnmA/TRMU family.

The protein resides in the cytoplasm. It catalyses the reaction S-sulfanyl-L-cysteinyl-[protein] + uridine(34) in tRNA + AH2 + ATP = 2-thiouridine(34) in tRNA + L-cysteinyl-[protein] + A + AMP + diphosphate + H(+). In terms of biological role, catalyzes the 2-thiolation of uridine at the wobble position (U34) of tRNA, leading to the formation of s(2)U34. This chain is tRNA-specific 2-thiouridylase MnmA, found in Vibrio vulnificus (strain YJ016).